A 217-amino-acid chain; its full sequence is Ribosome maturation factor RimP (217 aa).

It belongs to the RimP family.

Its subcellular location is the cytoplasm. Its function is as follows. Required for maturation of 30S ribosomal subunits. The protein is Ribosome maturation factor RimP of Nocardia farcinica (strain IFM 10152).